Reading from the N-terminus, the 197-residue chain is MAKVLILKSSILGSYSQSSALVDYLNQQWSSKGAQIKVRDLGENTLPMLDGELASGLRGGDNLSERQLSALALSDELVAEIKAHDTIIIAAPMYNFGIPTTLKNWIDLIARAGVTFTYTDTGAVGLIEGKRAIIVTTRGGAHKGGPTDHVVPYLTTVLGFIGINNVETIYAEALNMGPDAAETGISQAKLAIDAITL.

FMN is bound by residues Ser10, 16 to 18, 93 to 96, and 137 to 140; these read SQS, MYNF, and TRGG.

This sequence belongs to the azoreductase type 1 family. In terms of assembly, homodimer. FMN is required as a cofactor.

It carries out the reaction 2 a quinone + NADH + H(+) = 2 a 1,4-benzosemiquinone + NAD(+). The catalysed reaction is N,N-dimethyl-1,4-phenylenediamine + anthranilate + 2 NAD(+) = 2-(4-dimethylaminophenyl)diazenylbenzoate + 2 NADH + 2 H(+). In terms of biological role, quinone reductase that provides resistance to thiol-specific stress caused by electrophilic quinones. Its function is as follows. Also exhibits azoreductase activity. Catalyzes the reductive cleavage of the azo bond in aromatic azo compounds to the corresponding amines. In Shewanella frigidimarina (strain NCIMB 400), this protein is FMN-dependent NADH:quinone oxidoreductase.